Here is a 539-residue protein sequence, read N- to C-terminus: MESKRAIIAIALSFVVLVGWSYLADHMGWNGQPAPQAQQEETAPSASQAAPQSASQAAAPAPRAETPVFLPSAGREVTVVTPLYKAVLHSGGGVLKHFSLTRYRTAITAGAPAVDMVDTASTVMSPLGLLINGQPSWNTGQWSFDGGDLSLGAGQSGVLTFTGEVDGVRVVRELTFSADTYLISEKVRLAPLADARTVRLGFTVGTGNLSPNGGQYDHTRVAWLHDGSFSEKTSASDLEKGVLETGALSWGAVMSNYFLVAAAPVDTTGVTLKGKLQEGVYRVAMERGDVSIPAGGETTVACNYWFGPKDRGLLKEAPNQLAEAINLGWFSIIARPLVDMLEFFHKYVGNYGVAIILLTVVIKLVFWPLSHKSYKSMEQMKKLQPMLQKLREKHGDDREKMNEEMMRLYKTYKVNPAGGCLPMLVQIPVFFGLYQALLNAIELRHASFITHLPFTDMVWLADLSAKDPYYITPIVMGATMLLQQKLTPAPGDPTQAKIMMFMPVVFTFMFLSFPSGLVVYWLCNNVLSIAQQWWMLRKA.

A helical transmembrane segment spans residues 7–27 (IIAIALSFVVLVGWSYLADHM). Residues 32 to 64 (QPAPQAQQEETAPSASQAAPQSASQAAAPAPRA) form a disordered region. 3 consecutive transmembrane segments (helical) span residues 347 to 367 (YVGN…LVFW), 418 to 438 (GGCL…QALL), and 498 to 518 (IMMF…SGLV).

It belongs to the OXA1/ALB3/YidC family. Type 1 subfamily. As to quaternary structure, interacts with the Sec translocase complex via SecD. Specifically interacts with transmembrane segments of nascent integral membrane proteins during membrane integration.

It localises to the cell inner membrane. In terms of biological role, required for the insertion and/or proper folding and/or complex formation of integral membrane proteins into the membrane. Involved in integration of membrane proteins that insert both dependently and independently of the Sec translocase complex, as well as at least some lipoproteins. Aids folding of multispanning membrane proteins. The sequence is that of Membrane protein insertase YidC from Nitratidesulfovibrio vulgaris (strain DSM 19637 / Miyazaki F) (Desulfovibrio vulgaris).